Reading from the N-terminus, the 425-residue chain is 3-deoxy-D-manno-octulosonic acid transferase (425 aa).

Residues 3–23 (ELLYTALLYLIQPLIWIRLWV) form a helical; Signal-anchor membrane-spanning segment. Glu-60 (proton acceptor) is an active-site residue. Residues 268 to 269 (PR), 309 to 311 (MGE), and 335 to 338 (NPLE) each bind CMP.

Belongs to the glycosyltransferase group 1 family. Glycosyltransferase 30 subfamily.

It is found in the cell inner membrane. It catalyses the reaction lipid IVA (E. coli) + CMP-3-deoxy-beta-D-manno-octulosonate = alpha-Kdo-(2-&gt;6)-lipid IVA (E. coli) + CMP + H(+). It carries out the reaction alpha-Kdo-(2-&gt;6)-lipid IVA (E. coli) + CMP-3-deoxy-beta-D-manno-octulosonate = alpha-Kdo-(2-&gt;4)-alpha-Kdo-(2-&gt;6)-lipid IVA (E. coli) + CMP + H(+). Its pathway is glycolipid biosynthesis; KDO(2)-lipid A biosynthesis; KDO(2)-lipid A from CMP-3-deoxy-D-manno-octulosonate and lipid IV(A): step 1/4. It functions in the pathway glycolipid biosynthesis; KDO(2)-lipid A biosynthesis; KDO(2)-lipid A from CMP-3-deoxy-D-manno-octulosonate and lipid IV(A): step 2/4. It participates in bacterial outer membrane biogenesis; LPS core biosynthesis. In terms of biological role, involved in lipopolysaccharide (LPS) biosynthesis. Catalyzes the transfer of two 3-deoxy-D-manno-octulosonate (Kdo) residues from CMP-Kdo to lipid IV(A), the tetraacyldisaccharide-1,4'-bisphosphate precursor of lipid A. The polypeptide is 3-deoxy-D-manno-octulosonic acid transferase (waaA) (Escherichia coli O157:H7).